A 148-amino-acid polypeptide reads, in one-letter code: Large ribosomal subunit protein bL9 (148 aa).

Belongs to the bacterial ribosomal protein bL9 family.

In terms of biological role, binds to the 23S rRNA. This Caldicellulosiruptor saccharolyticus (strain ATCC 43494 / DSM 8903 / Tp8T 6331) protein is Large ribosomal subunit protein bL9.